The chain runs to 175 residues: Ribosome-binding factor A (175 aa).

The tract at residues 131–175 (KPAGEADPYRDRGSVDEPSDAGGLVIRTSDGLEAENTGDDYQAED) is disordered. Residues 162 to 175 (LEAENTGDDYQAED) are compositionally biased toward acidic residues.

It belongs to the RbfA family. As to quaternary structure, monomer. Binds 30S ribosomal subunits, but not 50S ribosomal subunits or 70S ribosomes.

Its subcellular location is the cytoplasm. Its function is as follows. One of several proteins that assist in the late maturation steps of the functional core of the 30S ribosomal subunit. Associates with free 30S ribosomal subunits (but not with 30S subunits that are part of 70S ribosomes or polysomes). Required for efficient processing of 16S rRNA. May interact with the 5'-terminal helix region of 16S rRNA. The chain is Ribosome-binding factor A from Mycobacterium ulcerans (strain Agy99).